A 440-amino-acid polypeptide reads, in one-letter code: Glutamate--tRNA ligase 1 (440 aa).

A 'HIGH' region motif is present at residues 7–17 (PSPTGYLHVGN). A 'KMSKS' region motif is present at residues 238–242 (KISKR). Residue Lys-241 coordinates ATP.

It belongs to the class-I aminoacyl-tRNA synthetase family. Glutamate--tRNA ligase type 1 subfamily. Monomer.

The protein resides in the cytoplasm. It catalyses the reaction tRNA(Glu) + L-glutamate + ATP = L-glutamyl-tRNA(Glu) + AMP + diphosphate. Functionally, catalyzes the attachment of glutamate to tRNA(Glu) in a two-step reaction: glutamate is first activated by ATP to form Glu-AMP and then transferred to the acceptor end of tRNA(Glu). The protein is Glutamate--tRNA ligase 1 of Wolbachia sp. subsp. Brugia malayi (strain TRS).